The sequence spans 389 residues: Arginine biosynthesis bifunctional protein ArgJ (389 aa).

Substrate-binding residues include threonine 150, lysine 173, threonine 184, glutamate 263, asparagine 384, and threonine 389. Threonine 184 (nucleophile) is an active-site residue.

It belongs to the ArgJ family. Heterotetramer of two alpha and two beta chains.

The protein localises to the cytoplasm. The catalysed reaction is N(2)-acetyl-L-ornithine + L-glutamate = N-acetyl-L-glutamate + L-ornithine. It carries out the reaction L-glutamate + acetyl-CoA = N-acetyl-L-glutamate + CoA + H(+). Its pathway is amino-acid biosynthesis; L-arginine biosynthesis; L-ornithine and N-acetyl-L-glutamate from L-glutamate and N(2)-acetyl-L-ornithine (cyclic): step 1/1. The protein operates within amino-acid biosynthesis; L-arginine biosynthesis; N(2)-acetyl-L-ornithine from L-glutamate: step 1/4. In terms of biological role, catalyzes two activities which are involved in the cyclic version of arginine biosynthesis: the synthesis of N-acetylglutamate from glutamate and acetyl-CoA as the acetyl donor, and of ornithine by transacetylation between N(2)-acetylornithine and glutamate. The protein is Arginine biosynthesis bifunctional protein ArgJ of Deinococcus radiodurans (strain ATCC 13939 / DSM 20539 / JCM 16871 / CCUG 27074 / LMG 4051 / NBRC 15346 / NCIMB 9279 / VKM B-1422 / R1).